We begin with the raw amino-acid sequence, 239 residues long: Tumor necrosis factor ligand superfamily member 8 (239 aa).

The tract at residues 1–36 (MEPGLQQAGSCGAPSPDPAMQVQPGSVASPWRSTRP) is disordered. Topologically, residues 1–43 (MEPGLQQAGSCGAPSPDPAMQVQPGSVASPWRSTRPWRSTSRS) are cytoplasmic. A helical; Signal-anchor for type II membrane protein transmembrane segment spans residues 44–67 (YFYLSTTALVCLVVAVAIILVLVV). Residues 68 to 239 (QKKDSTPNTT…LSVFLYSSSD (172 aa)) lie on the Extracellular side of the membrane. Residues Asn-75, Asn-86, Asn-114, Asn-158, Asn-194, and Asn-206 are each glycosylated (N-linked (GlcNAc...) asparagine). A THD domain is found at 103-230 (SWAYLQVSKH…TNTFPLDNVL (128 aa)). The cysteines at positions 156 and 182 are disulfide-linked.

It belongs to the tumor necrosis factor family. As to quaternary structure, homotrimer.

The protein resides in the membrane. In terms of biological role, cytokine that binds to TNFRSF8/CD30. Induces proliferation of T-cells. In Mus musculus (Mouse), this protein is Tumor necrosis factor ligand superfamily member 8 (Tnfsf8).